The sequence spans 1364 residues: RecQ-like DNA helicase BLM (1364 aa).

Disordered regions lie at residues Val-108 to Asn-131 and Asp-147 to Ser-174. The interval Asp-328–Asp-377 is necessary for dimerization and homooligomerization. Disordered stretches follow at residues Phe-380–Ser-416, Arg-484–Leu-515, and Ser-535–Ser-580. The span at Ser-387–Thr-399 shows a compositional bias: low complexity. The segment covering Arg-484–Tyr-503 has biased composition (polar residues). Residues Ala-555–Thr-566 show a composition bias toward basic and acidic residues. Residues Arg-567–Ser-580 show a composition bias toward polar residues. ATP-binding positions include Phe-620–Gln-624 and Gly-644–Ser-648. Residues Ile-628–Gln-803 enclose the Helicase ATP-binding domain. The DEAH box signature appears at Asp-747–His-750. 2 3' overhang DNA-binding regions span residues Lys-822–Arg-825 and Ser-849–His-851. One can recognise a Helicase C-terminal domain in the interval Asp-829 to Tyr-976. Arg-934 contacts ATP. Residues Arg-952–Arg-955 are 3' overhang DNA-binding. Cys-988, Cys-1007, Cys-1015, and Cys-1018 together coordinate Zn(2+). The DNA Holliday junction binding stretch occupies residues Leu-1046–Arg-1090. 3' overhang DNA-binding stretches follow at residues Thr-1061–Asn-1063, Ser-1072–Lys-1076, and Tyr-1111–Gln-1117. An HRDC domain is found at Glu-1164–Val-1244. The segment at Lys-1179–Ala-1196 is necessary for ssDNA and DNA Holliday junction binding. Residue Asn-1194 participates in ATP binding. Positions Ser-1251–Phe-1364 are disordered. Polar residues predominate over residues Lys-1273 to Lys-1282. The span at Lys-1283 to Lys-1300 shows a compositional bias: basic residues. The Nuclear localization signal motif lies at Pro-1285 to Thr-1301. The span at Gln-1306–Lys-1335 shows a compositional bias: polar residues.

Belongs to the helicase family. RecQ subfamily. As to quaternary structure, monomer. Homodimer (via N-terminus). Homotetramer (via N-terminus); dimer of dimers. Homohexamer (via N-terminus). Self-association negatively regulates DNA unwinding amplitude and rate. Oligomer complexes dissociate into monomer in presence of ATP. Requires Zn(2+) as cofactor.

Its subcellular location is the nucleus. It carries out the reaction Couples ATP hydrolysis with the unwinding of duplex DNA by translocating in the 3'-5' direction.. The catalysed reaction is ATP + H2O = ADP + phosphate + H(+). ATP-dependent DNA helicase that unwinds single- and double-stranded DNA in a 3'-5' direction. Participates in DNA replication and repair. Involved in 5'-end resection of DNA during double-strand break (DSB) repair. Negatively regulates sister chromatid exchange (SCE). Stimulates DNA 4-way junction branch migration and DNA Holliday junction dissolution. Binds single-stranded DNA (ssDNA), forked duplex DNA and DNA Holliday junction. The polypeptide is RecQ-like DNA helicase BLM (blm) (Xenopus laevis (African clawed frog)).